The primary structure comprises 545 residues: Eukaryotic translation initiation factor 3 subunit D-2 (545 aa).

The disordered stretch occupies residues 94-148 (FQRGRFRGNTRNNPRTRGRTGRGGAVTGTGGNQPGVGVNERTKYGKGRDNRRQMG). A compositionally biased stretch (basic residues) spans 95 to 113 (QRGRFRGNTRNNPRTRGRT). The span at 114–127 (GRGGAVTGTGGNQP) shows a compositional bias: gly residues. Basic and acidic residues predominate over residues 133–145 (ERTKYGKGRDNRR). Positions 287–301 (QFDLLTVNETALEPP) are RNA gate.

It belongs to the eIF-3 subunit D family. In terms of assembly, component of the eukaryotic translation initiation factor 3 (eIF-3) complex. The eIF-3 complex interacts with pix.

It is found in the cytoplasm. MRNA cap-binding component of the eukaryotic translation initiation factor 3 (eIF-3) complex, which is involved in protein synthesis of a specialized repertoire of mRNAs and, together with other initiation factors, stimulates binding of mRNA and methionyl-tRNAi to the 40S ribosome. The eIF-3 complex specifically targets and initiates translation of a subset of mRNAs involved in cell proliferation. In the eIF-3 complex, eif3d specifically recognizes and binds the 7-methylguanosine cap of a subset of mRNAs. This Drosophila pseudoobscura pseudoobscura (Fruit fly) protein is Eukaryotic translation initiation factor 3 subunit D-2.